The chain runs to 309 residues: MSANLEYPNGTTADAENGMWLHHILFYNKANRDDICGEKKPGQRFFGSGNDRTPLDLTDGGKNKLGYHIGHNDQFFISVELMNMHFSSQVVVLTAHWKFVEEPYSKYELGTPYWFDVASCGRSDVPATNNAIFDFISPPVRLDFHGRMAYLSNHVHDGAFLHEVKKNGKTICSVNPQYSSADGADGIVHLSHVPPCSNAGPVAPGDEVSLTASYDTTKYKPMINEDGTLEPVMGVTLAYIVKGTAPVENDSGGRLYFAVPLAAIAFIALIISGGYVIYSAKQQKAWPKWLSRRQKYQSVGTEVESFITR.

2 N-linked (GlcNAc...) asparagine glycosylation sites follow: Asn9 and Asn249. A helical membrane pass occupies residues 257 to 277 (FAVPLAAIAFIALIISGGYVI).

Belongs to the clz3 oxygenase family.

Its subcellular location is the membrane. Its pathway is secondary metabolite biosynthesis. Its function is as follows. Probable copper-dependent oxygenase; part of the gene cluster that mediates the biosynthesis of squalestatin S1 (SQS1, also known as zaragozic acid A), a heavily oxidized fungal polyketide that offers potent cholesterol lowering activity by targeting squalene synthase (SS). SQS1 is composed of a 2,8-dioxobicyclic[3.2.1]octane-3,4,5-tricarboxyclic acid core that is connected to two lipophilic polyketide arms. These initial steps feature the priming of an unusual benzoic acid starter unit onto the highly reducing polyketide synthase clz14, followed by oxaloacetate extension and product release to generate a tricarboxylic acid containing product. The phenylalanine ammonia lyase (PAL) clz10 and the acyl-CoA ligase clz12 are involved in transforming phenylalanine into benzoyl-CoA. The citrate synthase-like protein clz17 is involved in connecting the C-alpha-carbons of the hexaketide chain and oxaloacetate to afford the tricarboxylic acid unit. The potential hydrolytic enzymes, clz11 and clz13, are in close proximity to pks2 and may participate in product release. On the other side, the tetraketide arm is synthesized by a the squalestatin tetraketide synthase clz2 and enzymatically esterified to the core in the last biosynthetic step, by the acetyltransferase clz6. The biosynthesis of the tetraketide must involve 3 rounds of chain extension. After the first and second rounds methyl-transfer occurs, and in all rounds of extension the ketoreductase and dehydratase are active. The enoyl reductase and C-MeT of clz2 are not active in the final round of extension. The acetyltransferase clz6 appears to have a broad substrate selectivity for its acyl CoA substrate, allowing the in vitro synthesis of novel squalestatins. The biosynthesis of SQS1 requires several oxidative steps likely performed by oxidoreductases clz3, clz15 and clz16. Finally, in support of the identification of the cluster as being responsible for SQS1 production, the cluster contains a gene encoding a putative squalene synthase (SS) clz20, suggesting a likely mechanism for self-resistance. This is Probable copper-dependent oxygenase clz3 from Cochliobolus lunatus (Filamentous fungus).